The sequence spans 113 residues: U11-theraphotoxin-Hhn1a (113 aa).

An N-terminal signal peptide occupies residues 1-21 (MNTVRATFLLVFVLAVSLGQA). The propeptide occupies 22 to 74 (DKDENRMEMQEKTEQGKSYLDFAENLLLQKLEELEAKLLEEDSEESRNSRQKR). A compositionally biased stretch (basic and acidic residues) spans 60 to 69 (LEEDSEESRN). A disordered region spans residues 60–82 (LEEDSEESRNSRQKRCIGEGVPC). 3 disulfide bridges follow: C75/C90, C82/C95, and C89/C110.

This sequence belongs to the neurotoxin 14 (magi-1) family. 01 (HNTX-16) subfamily. Expressed by the venom gland.

Its subcellular location is the secreted. Probable ion channel inhibitor. The polypeptide is U11-theraphotoxin-Hhn1a (Cyriopagopus hainanus (Chinese bird spider)).